A 46-amino-acid polypeptide reads, in one-letter code: Large ribosomal subunit protein bL34c (46 aa).

This sequence belongs to the bacterial ribosomal protein bL34 family.

It localises to the plastid. It is found in the chloroplast. The polypeptide is Large ribosomal subunit protein bL34c (rpl34) (Guillardia theta (Cryptophyte)).